Here is a 348-residue protein sequence, read N- to C-terminus: Dihydroorotate dehydrogenase (quinone) (348 aa).

Residues 65 to 69 (AGMDK) and T89 each bind FMN. K69 lines the substrate pocket. Position 114 to 118 (114 to 118 (NRMGF)) interacts with substrate. FMN is bound by residues N143 and N176. Residue N176 participates in substrate binding. S179 serves as the catalytic Nucleophile. N181 is a substrate binding site. Residues K221 and T249 each contribute to the FMN site. Residue 250-251 (NT) participates in substrate binding. FMN is bound by residues G272, G301, and 322–323 (YT).

Belongs to the dihydroorotate dehydrogenase family. Type 2 subfamily. Monomer. It depends on FMN as a cofactor.

The protein resides in the cell membrane. It carries out the reaction (S)-dihydroorotate + a quinone = orotate + a quinol. It participates in pyrimidine metabolism; UMP biosynthesis via de novo pathway; orotate from (S)-dihydroorotate (quinone route): step 1/1. In terms of biological role, catalyzes the conversion of dihydroorotate to orotate with quinone as electron acceptor. The polypeptide is Dihydroorotate dehydrogenase (quinone) (Akkermansia muciniphila (strain ATCC BAA-835 / DSM 22959 / JCM 33894 / BCRC 81048 / CCUG 64013 / CIP 107961 / Muc)).